A 347-amino-acid polypeptide reads, in one-letter code: UDP-N-acetylenolpyruvoylglucosamine reductase (347 aa).

Residues 23–197 (LPARAARLLR…LRVRFRLPQA (175 aa)) form the FAD-binding PCMH-type domain. The active site involves R174. The active-site Proton donor is the S247. E343 is an active-site residue.

It belongs to the MurB family. Requires FAD as cofactor.

It is found in the cytoplasm. It carries out the reaction UDP-N-acetyl-alpha-D-muramate + NADP(+) = UDP-N-acetyl-3-O-(1-carboxyvinyl)-alpha-D-glucosamine + NADPH + H(+). It functions in the pathway cell wall biogenesis; peptidoglycan biosynthesis. In terms of biological role, cell wall formation. This is UDP-N-acetylenolpyruvoylglucosamine reductase from Azoarcus sp. (strain BH72).